Consider the following 393-residue polypeptide: Thyrotropin-releasing hormone receptor (393 aa).

Over 1–28 (MENDTVSEMNQTELQPQAAVALEYQVVT) the chain is Extracellular. Asn-3 and Asn-10 each carry an N-linked (GlcNAc...) asparagine glycan. The helical transmembrane segment at 29 to 51 (ILLVVIICGLGIVGNIMVVLVVM) threads the bilayer. Residues 52–61 (RTKHMRTPTN) are Cytoplasmic-facing. Residues 62–83 (CYLVSLAVADLMVLVAAGLPNI) form a helical membrane-spanning segment. Residues 84 to 99 (TDSIYGSWVYGYVGCL) lie on the Extracellular side of the membrane. Cysteines 98 and 179 form a disulfide. The helical transmembrane segment at 100 to 121 (CITYLQYLGINASSCSITAFTI) threads the bilayer. Topologically, residues 122–144 (ERYIAICHPIKAQFLCTFSRAKK) are cytoplasmic. A helical membrane pass occupies residues 145–168 (IIIFVWAFTSIYCMLWFFLLDLNI). Residues 169–193 (STYKNAVVVSCGYKISRNYYSPIYL) are Extracellular-facing. A helical membrane pass occupies residues 194 to 215 (MDFGVFYVVPMILATVLYGFIA). Topologically, residues 216-266 (RILFLNPIPSDPKENSKMWKNDSIHQNKNLNLNATNRCFNSTVSSRKQVTK) are cytoplasmic. Residues 267–288 (MLAVVVILFALLWMPYRTLVVV) traverse the membrane as a helical segment. Topologically, residues 289 to 296 (NSFLSSPF) are extracellular. The helical transmembrane segment at 297–319 (QENWFLLFCRICIYLNSAINPVI) threads the bilayer. At 320–393 (YNLMSQKFRA…FDDTCLASEN (74 aa)) the chain is on the cytoplasmic side.

This sequence belongs to the G-protein coupled receptor 1 family.

The protein resides in the cell membrane. Receptor for thyrotropin-releasing hormone (TRH). Upon ligand binding, this G-protein-coupled receptor triggers activation of the phosphatidylinositol (IP3)-calcium-protein kinase C (PKC) pathway. The sequence is that of Thyrotropin-releasing hormone receptor (Trhr) from Mus musculus (Mouse).